Consider the following 318-residue polypeptide: Ribonuclease Z (318 aa).

H63, H65, D67, H68, H142, D213, and H273 together coordinate Zn(2+). The active-site Proton acceptor is D67.

Belongs to the RNase Z family. As to quaternary structure, homodimer. It depends on Zn(2+) as a cofactor.

The catalysed reaction is Endonucleolytic cleavage of RNA, removing extra 3' nucleotides from tRNA precursor, generating 3' termini of tRNAs. A 3'-hydroxy group is left at the tRNA terminus and a 5'-phosphoryl group is left at the trailer molecule.. Zinc phosphodiesterase, which displays some tRNA 3'-processing endonuclease activity. Probably involved in tRNA maturation, by removing a 3'-trailer from precursor tRNA. The sequence is that of Ribonuclease Z from Leuconostoc mesenteroides subsp. mesenteroides (strain ATCC 8293 / DSM 20343 / BCRC 11652 / CCM 1803 / JCM 6124 / NCDO 523 / NBRC 100496 / NCIMB 8023 / NCTC 12954 / NRRL B-1118 / 37Y).